We begin with the raw amino-acid sequence, 450 residues long: Tubulin alpha-3 chain (450 aa).

GTP contacts are provided by Gln11, Glu71, Gly144, Thr145, Thr179, Asn206, and Asn228. Glu71 provides a ligand contact to Mg(2+). The active site involves Glu254.

This sequence belongs to the tubulin family. As to quaternary structure, dimer of alpha and beta chains. A typical microtubule is a hollow water-filled tube with an outer diameter of 25 nm and an inner diameter of 15 nM. Alpha-beta heterodimers associate head-to-tail to form protofilaments running lengthwise along the microtubule wall with the beta-tubulin subunit facing the microtubule plus end conferring a structural polarity. Microtubules usually have 13 protofilaments but different protofilament numbers can be found in some organisms and specialized cells. Requires Mg(2+) as cofactor. In terms of processing, undergoes a tyrosination/detyrosination cycle, the cyclic removal and re-addition of a C-terminal tyrosine residue by the enzymes tubulin tyrosine carboxypeptidase (TTCP) and tubulin tyrosine ligase (TTL), respectively.

It is found in the cytoplasm. It localises to the cytoskeleton. It carries out the reaction GTP + H2O = GDP + phosphate + H(+). Tubulin is the major constituent of microtubules, a cylinder consisting of laterally associated linear protofilaments composed of alpha- and beta-tubulin heterodimers. Microtubules grow by the addition of GTP-tubulin dimers to the microtubule end, where a stabilizing cap forms. Below the cap, tubulin dimers are in GDP-bound state, owing to GTPase activity of alpha-tubulin. This chain is Tubulin alpha-3 chain (TUBA3), found in Eleusine indica (Goosegrass).